Reading from the N-terminus, the 967-residue chain is Kinesin heavy chain (967 aa).

One can recognise a Kinesin motor domain in the interval 8–326 (NIKVICRVRP…LLFGQRAKTI (319 aa)). 85-92 (GQTSSGKT) contacts ATP. Positions 173–314 (VSSPEEVMEV…PASYNESETK (142 aa)) are microtubule-binding. Disordered stretches follow at residues 387–411 (VPAE…NEGD) and 923–967 (KPIR…ESKA). Residues 392–861 (PATSTTSLAG…RDNADLRCEL (470 aa)) are a coiled coil. A globular region spans residues 862–967 (PKLEKRLRAT…PIRMAPESKA (106 aa)). Residues 949–958 (QNGPMITSTP) are compositionally biased toward polar residues.

This sequence belongs to the TRAFAC class myosin-kinesin ATPase superfamily. Kinesin family. Kinesin subfamily. As to quaternary structure, oligomer composed of two heavy chains and two light chains. Interacts with amyloid-beta precursor-like protein (via cytoplasmic domain).

It localises to the cytoplasm. The protein resides in the cytoskeleton. The protein localises to the cell projection. Its subcellular location is the axon. In terms of biological role, kinesin is a microtubule-associated force-producing protein that may play a role in organelle transport. The polypeptide is Kinesin heavy chain (Doryteuthis pealeii (Longfin inshore squid)).